The chain runs to 298 residues: 4-hydroxy-tetrahydrodipicolinate synthase (298 aa).

A pyruvate-binding site is contributed by threonine 51. Residue tyrosine 139 is the Proton donor/acceptor of the active site. Lysine 167 acts as the Schiff-base intermediate with substrate in catalysis. Isoleucine 209 is a pyruvate binding site.

This sequence belongs to the DapA family. As to quaternary structure, homotetramer; dimer of dimers.

It is found in the cytoplasm. It carries out the reaction L-aspartate 4-semialdehyde + pyruvate = (2S,4S)-4-hydroxy-2,3,4,5-tetrahydrodipicolinate + H2O + H(+). It participates in amino-acid biosynthesis; L-lysine biosynthesis via DAP pathway; (S)-tetrahydrodipicolinate from L-aspartate: step 3/4. Its function is as follows. Catalyzes the condensation of (S)-aspartate-beta-semialdehyde [(S)-ASA] and pyruvate to 4-hydroxy-tetrahydrodipicolinate (HTPA). This Histophilus somni (strain 129Pt) (Haemophilus somnus) protein is 4-hydroxy-tetrahydrodipicolinate synthase.